The chain runs to 289 residues: ADP-polyphosphate phosphotransferase (289 aa).

The protein belongs to the polyphosphate kinase 2 (PPK2) family. Class I subfamily.

The catalysed reaction is [phosphate](n) + ATP = [phosphate](n+1) + ADP. In terms of biological role, uses inorganic polyphosphate (polyP) as a donor to convert ADP to ATP. This chain is ADP-polyphosphate phosphotransferase, found in Rhodopseudomonas palustris (strain ATCC BAA-98 / CGA009).